Here is a 1534-residue protein sequence, read N- to C-terminus: Slit homolog 1 protein (1534 aa).

The N-terminal stretch at 1-33 is a signal peptide; sequence MALTPGWGSSAGPVRPELWLLLWAAAWRLGASA. One can recognise an LRRNT domain in the interval 34–61; sequence CPALCTCTGTTVDCHGTGLQAIPKNIPR. LRR repeat units lie at residues 62-83, 86-107, 110-131, 134-155, 158-179, and 182-203; these read NTER…DFAG, QLRV…AFDD, ELER…LFQN, ALSR…AFRG, DLKN…AFRA, and GLEV…SFNH. N-linked (GlcNAc...) asparagine glycosylation occurs at N72. A glycan (N-linked (GlcNAc...) asparagine) is linked at N192. In terms of domain architecture, LRRCT 1 spans 215-265; that stretch reads NHLFCDCHLAWLSQWLRQRPTIGLFTQCSGPASLRGLNVAEVQKSEFSCSG. In terms of domain architecture, LRRNT 2 spans 273–309; sequence PTCTLSSGSCPAMCTCSNGIVDCRGKGLTAIPANLPE. C286 and C295 are disulfide-bonded. LRR repeat units lie at residues 310–331, 334–355, 358–379, 382–403, and 406–427; these read TMTE…AFSP, KLRR…AFQG, SLNS…VFGG, TLQL…AFQD, and NLSL…TFTS. N-linked (GlcNAc...) asparagine glycosylation is present at N406. Positions 439-489 constitute an LRRCT 2 domain; sequence NPFICDCNLKWLADFLRTNPIETSGARCASPRRLANKRIGQIKSKKFRCSA. Intrachain disulfides connect C443–C466, C445–C487, C513–C519, and C517–C526. Positions 504–540 constitute an LRRNT 3 domain; the sequence is NSECNSDVVCPHKCRCEANVVECSSLKLTKIPERIPQ. LRR repeat units lie at residues 541–562, 566–587, 590–611, 614–635, and 638–659; these read STAE…GMFK, HLKK…AFEG, SVSE…MFRG, GLRT…SFTG, and NVRL…AFDT. N571 is a glycosylation site (N-linked (GlcNAc...) asparagine). N-linked (GlcNAc...) asparagine glycosylation is present at N630. The LRRCT 3 domain maps to 671-721; sequence NPFNCNCQLAWLGGWLRKRKIVTGNPRCQNPDFLRQIPLQDVAFPDFRCEE. 2 cysteine pairs are disulfide-bonded: C675–C698 and C677–C719. An LRRNT 4 domain is found at 725 to 761; it reads EGGCLPRPQCPQECACLDTVVRCSNKHLRALPKGIPK. N-linked (GlcNAc...) asparagine glycosylation is found at N762, N801, and N806. 4 LRR repeats span residues 762–783, 785–806, 809–830, and 833–854; these read NVTE…LSTF, YLQL…SFTN, QLTT…AFQG, and SLRL…IFAD. An LRRCT 4 domain is found at 866 to 916; that stretch reads NPLYCDCHLRWLSSWVKTGYKEPGIARCAGPQDMEGKLLLTTPAKKFECQG. 6 EGF-like domains span residues 927–962, 964–1003, 1005–1041, 1043–1081, 1083–1119, and 1127–1163; these read DLCL…RDCE, SLDS…PTCG, NTDD…KACE, LVDL…DNCS, NQDD…QLCE, and PKSP…PECE. 18 disulfide bridges follow: C929/C940, C934/C950, C952/C961, C968/C979, C973/C991, C993/C1002, C1009/C1020, C1014/C1029, C1031/C1040, C1047/C1060, C1054/C1069, C1071/C1080, C1087/C1098, C1092/C1107, C1109/C1118, C1131/C1142, C1136/C1151, and C1153/C1162. A glycan (N-linked (GlcNAc...) asparagine) is linked at N1026. N1079 is a glycosylation site (N-linked (GlcNAc...) asparagine). Positions 1166–1339 constitute a Laminin G-like domain; the sequence is LSVNFVDRDT…QMKPGVVPGC (174 aa). N-linked (GlcNAc...) asparagine glycans are attached at residues N1189, N1259, and N1306. Cystine bridges form between C1313-C1339, C1342-C1352, C1347-C1362, C1364-C1373, C1381-C1391, C1386-C1401, C1403-C1412, C1422-C1432, C1427-C1442, C1444-C1453, C1459-C1498, C1477-C1512, C1488-C1528, and C1492-C1530. 3 consecutive EGF-like domains span residues 1340-1374, 1377-1413, and 1418-1454; these read EPCR…LHCD, ADGP…ALCN, and LAEP…ELCE. The 76-residue stretch at 1459-1534 folds into the CTCK domain; that stretch reads CRGDPVRDFH…PTKCGCALCA (76 aa).

As to quaternary structure, interacts with ROBO1 and GREM1. Predominantly expressed in adult forebrain. Expressed in fetal brain, lung and kidney.

Its subcellular location is the secreted. Its function is as follows. Thought to act as molecular guidance cue in cellular migration, and function appears to be mediated by interaction with roundabout homolog receptors. During neural development involved in axonal navigation at the ventral midline of the neural tube and projection of axons to different regions. SLIT1 and SLIT2 together seem to be essential for midline guidance in the forebrain by acting as repulsive signal preventing inappropriate midline crossing by axons projecting from the olfactory bulb. The polypeptide is Slit homolog 1 protein (SLIT1) (Homo sapiens (Human)).